A 238-amino-acid polypeptide reads, in one-letter code: Ribosomal RNA small subunit methyltransferase G (238 aa).

Residues glycine 77, phenylalanine 82, 128-129 (AE), and arginine 147 each bind S-adenosyl-L-methionine. The segment at 219 to 238 (KETPNKYPRKPGTPNKLPIE) is disordered.

The protein belongs to the methyltransferase superfamily. RNA methyltransferase RsmG family.

The protein localises to the cytoplasm. Its function is as follows. Specifically methylates the N7 position of guanine in position 535 of 16S rRNA. This is Ribosomal RNA small subunit methyltransferase G from Listeria monocytogenes serovar 1/2a (strain ATCC BAA-679 / EGD-e).